The primary structure comprises 320 residues: Peroxidase 66 (320 aa).

The N-terminal stretch at 1–29 is a signal peptide; the sequence is MAASVSASCLNRLSSLAVVLVALASAASA. At Gln30 the chain carries Pyrrolidone carboxylic acid. Cystine bridges form between Cys40–Cys118, Cys73–Cys78, Cys124–Cys315, and Cys202–Cys227. The active-site Proton acceptor is His71. 5 residues coordinate Ca(2+): Asp72, Val75, Gly77, Asp79, and Ser81. 2 N-linked (GlcNAc...) asparagine glycosylation sites follow: Asn85 and Asn96. Pro165 provides a ligand contact to substrate. His195 contacts heme b. Position 196 (Thr196) interacts with Ca(2+). Residue Asn211 is glycosylated (N-linked (GlcNAc...) asparagine). Ca(2+)-binding residues include Asp239, Thr242, and Asp247.

The protein belongs to the peroxidase family. Classical plant (class III) peroxidase subfamily. Heme b is required as a cofactor. It depends on Ca(2+) as a cofactor.

It localises to the secreted. It catalyses the reaction 2 a phenolic donor + H2O2 = 2 a phenolic radical donor + 2 H2O. Functionally, removal of H(2)O(2), oxidation of toxic reductants, biosynthesis and degradation of lignin, suberization, auxin catabolism, response to environmental stresses such as wounding, pathogen attack and oxidative stress. These functions might be dependent on each isozyme/isoform in each plant tissue. The protein is Peroxidase 66 (PER66) of Zea mays (Maize).